Here is a 544-residue protein sequence, read N- to C-terminus: Chaperonin GroEL (544 aa).

ATP-binding positions include 30 to 33 (TLGP), lysine 51, 87 to 91 (DGTTT), glycine 415, and aspartate 495.

It belongs to the chaperonin (HSP60) family. In terms of assembly, forms a cylinder of 14 subunits composed of two heptameric rings stacked back-to-back. Interacts with the co-chaperonin GroES.

It is found in the cytoplasm. It carries out the reaction ATP + H2O + a folded polypeptide = ADP + phosphate + an unfolded polypeptide.. Together with its co-chaperonin GroES, plays an essential role in assisting protein folding. The GroEL-GroES system forms a nano-cage that allows encapsulation of the non-native substrate proteins and provides a physical environment optimized to promote and accelerate protein folding. This Neisseria gonorrhoeae (strain ATCC 700825 / FA 1090) protein is Chaperonin GroEL.